The following is a 365-amino-acid chain: MHNESPIKRRKSTRIYVGNVPIGDGAPIAVQSMTNTRTTDVEATVRQIQSLERVGVDIVRVSVPTMDAAEAFKLIKQRVNVPLVADIHFDYRIAMKVAEYGVDCLRINPGNIGSEERIRQVVDSARHHNIPIRIGVNGGSLEKDIQEKYGEPTPEALVESAMRHVDILDRLNFDQFKVSVKASDVFLAVGSYRLLAQKIDQPLHLGITEAGGARSGSVKSAIGLGMLLAEGIGDTLRISLAADPVEEVKVGFDILKSLRIRSRGINFIACPTCSRQEFDVIGTVNALEQRLEDIITPMDVSIIGCVVNGPGEAEVSTLGVAGAKTKSGFYEDGVRKKERFDNDNIIDQLEAKIRAKAAMLDEITV.

Cys-270, Cys-273, Cys-305, and Glu-312 together coordinate [4Fe-4S] cluster.

This sequence belongs to the IspG family. Requires [4Fe-4S] cluster as cofactor.

It carries out the reaction (2E)-4-hydroxy-3-methylbut-2-enyl diphosphate + 2 oxidized [2Fe-2S]-[ferredoxin] + H2O = 2-C-methyl-D-erythritol 2,4-cyclic diphosphate + 2 reduced [2Fe-2S]-[ferredoxin] + H(+). It catalyses the reaction (2E)-4-hydroxy-3-methylbut-2-enyl diphosphate + oxidized [flavodoxin] + H2O + 2 H(+) = 2-C-methyl-D-erythritol 2,4-cyclic diphosphate + reduced [flavodoxin]. Its pathway is isoprenoid biosynthesis; isopentenyl diphosphate biosynthesis via DXP pathway; isopentenyl diphosphate from 1-deoxy-D-xylulose 5-phosphate: step 5/6. Its function is as follows. Converts 2C-methyl-D-erythritol 2,4-cyclodiphosphate (ME-2,4cPP) into 1-hydroxy-2-methyl-2-(E)-butenyl 4-diphosphate. Involved in density-dependent regulation of 2'-N-acetyltransferase. This chain is 4-hydroxy-3-methylbut-2-en-1-yl diphosphate synthase (flavodoxin), found in Providencia stuartii.